We begin with the raw amino-acid sequence, 363 residues long: Pyrimidine monooxygenase RutA (363 aa).

FMN is bound by residues 49 to 50 (IK), Asn115, Glu124, 140 to 141 (RY), and Ser190.

This sequence belongs to the NtaA/SnaA/DszA monooxygenase family. RutA subfamily.

It carries out the reaction uracil + FMNH2 + NADH + O2 = (Z)-3-ureidoacrylate + FMN + NAD(+) + H2O + H(+). The enzyme catalyses thymine + FMNH2 + NADH + O2 = (Z)-2-methylureidoacrylate + FMN + NAD(+) + H2O + H(+). In terms of biological role, catalyzes the pyrimidine ring opening between N-3 and C-4 by an unusual flavin hydroperoxide-catalyzed mechanism, adding oxygen atoms in the process to yield ureidoacrylate peracid, that immediately reacts with FMN forming ureidoacrylate and FMN-N(5)-oxide. The FMN-N(5)-oxide reacts spontaneously with NADH to produce FMN. Requires the flavin reductase RutF to regenerate FMN in vivo. This Klebsiella pneumoniae subsp. pneumoniae (strain ATCC 700721 / MGH 78578) protein is Pyrimidine monooxygenase RutA.